A 417-amino-acid chain; its full sequence is Serine hydroxymethyltransferase (417 aa).

Residues leucine 121 and 125–127 (GHL) contribute to the (6S)-5,6,7,8-tetrahydrofolate site. At lysine 229 the chain carries N6-(pyridoxal phosphate)lysine. Residue 355–357 (SPF) participates in (6S)-5,6,7,8-tetrahydrofolate binding.

The protein belongs to the SHMT family. In terms of assembly, homodimer. Pyridoxal 5'-phosphate is required as a cofactor.

The protein localises to the cytoplasm. It carries out the reaction (6R)-5,10-methylene-5,6,7,8-tetrahydrofolate + glycine + H2O = (6S)-5,6,7,8-tetrahydrofolate + L-serine. It participates in one-carbon metabolism; tetrahydrofolate interconversion. The protein operates within amino-acid biosynthesis; glycine biosynthesis; glycine from L-serine: step 1/1. Functionally, catalyzes the reversible interconversion of serine and glycine with tetrahydrofolate (THF) serving as the one-carbon carrier. This reaction serves as the major source of one-carbon groups required for the biosynthesis of purines, thymidylate, methionine, and other important biomolecules. Also exhibits THF-independent aldolase activity toward beta-hydroxyamino acids, producing glycine and aldehydes, via a retro-aldol mechanism. This is Serine hydroxymethyltransferase from Shewanella baltica (strain OS195).